A 177-amino-acid chain; its full sequence is Ribosome maturation factor RimM (177 aa).

Residues 104-177 (GVDGIWADLI…IIKVKLMEGM (74 aa)) form the PRC barrel domain.

This sequence belongs to the RimM family. In terms of assembly, binds ribosomal protein uS19.

The protein localises to the cytoplasm. Functionally, an accessory protein needed during the final step in the assembly of 30S ribosomal subunit, possibly for assembly of the head region. Essential for efficient processing of 16S rRNA. May be needed both before and after RbfA during the maturation of 16S rRNA. It has affinity for free ribosomal 30S subunits but not for 70S ribosomes. The sequence is that of Ribosome maturation factor RimM from Magnetococcus marinus (strain ATCC BAA-1437 / JCM 17883 / MC-1).